The primary structure comprises 728 residues: Phosphoribosylformylglycinamidine synthase subunit PurL (728 aa).

Residue histidine 42 is part of the active site. Positions 45 and 84 each coordinate ATP. A Mg(2+)-binding site is contributed by glutamate 86. Residues 87 to 90 (SHNH) and arginine 109 contribute to the substrate site. Histidine 88 functions as the Proton acceptor in the catalytic mechanism. Aspartate 110 lines the Mg(2+) pocket. Residue glutamine 237 participates in substrate binding. Position 265 (aspartate 265) interacts with Mg(2+). Residue 309-311 (ESQ) coordinates substrate. Positions 491 and 528 each coordinate ATP. Asparagine 529 is a binding site for Mg(2+). Position 531 (serine 531) interacts with substrate.

It belongs to the FGAMS family. In terms of assembly, monomer. Part of the FGAM synthase complex composed of 1 PurL, 1 PurQ and 2 PurS subunits.

It localises to the cytoplasm. It carries out the reaction N(2)-formyl-N(1)-(5-phospho-beta-D-ribosyl)glycinamide + L-glutamine + ATP + H2O = 2-formamido-N(1)-(5-O-phospho-beta-D-ribosyl)acetamidine + L-glutamate + ADP + phosphate + H(+). It functions in the pathway purine metabolism; IMP biosynthesis via de novo pathway; 5-amino-1-(5-phospho-D-ribosyl)imidazole from N(2)-formyl-N(1)-(5-phospho-D-ribosyl)glycinamide: step 1/2. Functionally, part of the phosphoribosylformylglycinamidine synthase complex involved in the purines biosynthetic pathway. Catalyzes the ATP-dependent conversion of formylglycinamide ribonucleotide (FGAR) and glutamine to yield formylglycinamidine ribonucleotide (FGAM) and glutamate. The FGAM synthase complex is composed of three subunits. PurQ produces an ammonia molecule by converting glutamine to glutamate. PurL transfers the ammonia molecule to FGAR to form FGAM in an ATP-dependent manner. PurS interacts with PurQ and PurL and is thought to assist in the transfer of the ammonia molecule from PurQ to PurL. The sequence is that of Phosphoribosylformylglycinamidine synthase subunit PurL from Campylobacter jejuni subsp. jejuni serotype O:23/36 (strain 81-176).